The sequence spans 200 residues: Pyridoxal 5'-phosphate synthase subunit PdxT (200 aa).

Gly46 to Ser48 provides a ligand contact to L-glutamine. The Nucleophile role is filled by Cys78. L-glutamine is bound by residues Arg107 and Ile138–Arg139. Residues His175 and Glu177 each act as charge relay system in the active site.

This sequence belongs to the glutaminase PdxT/SNO family. In the presence of PdxS, forms a dodecamer of heterodimers. Only shows activity in the heterodimer.

The enzyme catalyses aldehydo-D-ribose 5-phosphate + D-glyceraldehyde 3-phosphate + L-glutamine = pyridoxal 5'-phosphate + L-glutamate + phosphate + 3 H2O + H(+). It carries out the reaction L-glutamine + H2O = L-glutamate + NH4(+). It functions in the pathway cofactor biosynthesis; pyridoxal 5'-phosphate biosynthesis. In terms of biological role, catalyzes the hydrolysis of glutamine to glutamate and ammonia as part of the biosynthesis of pyridoxal 5'-phosphate. The resulting ammonia molecule is channeled to the active site of PdxS. The sequence is that of Pyridoxal 5'-phosphate synthase subunit PdxT from Corynebacterium glutamicum (strain R).